Here is a 63-residue protein sequence, read N- to C-terminus: Small integral membrane protein 43 (63 aa).

Important for interaction with SLC2A1 and SLC2A3 regions lie at residues 7–29 (LLLYLALFFFLLFLLFLLLFVVI) and 51–57 (HREPWGF). A helical membrane pass occupies residues 9–29 (LYLALFFFLLFLLFLLLFVVI).

As to quaternary structure, interacts with glucose transporters SLC2A1/GLUT1 and SLC2A3/GLUT3; the interactions may promote SLC2A1- and SLC2A3-mediated glucose transport to meet the energy needs of mesendoderm differentiation. As to expression, accumulates in the posterior primitive streak of mid-gastrulation embryos at 7.0 dpc. In the adult, highly abundant and enriched in the brain compared to other organs.

Its subcellular location is the cell membrane. Its function is as follows. Required for mesendoderm differentiation. Interacts with glucose transporters and promotes glucose uptake. Probably augments the glucose uptake capacity of glucose transporter proteins to meet the energy needs of mesendoderm differentiation. In Mus musculus (Mouse), this protein is Small integral membrane protein 43.